Consider the following 278-residue polypeptide: Envelope glycoprotein L (278 aa).

The first 30 residues, 1-30 (MCRRPDCGFSFSPGPVILLWCCLLLPIVSS), serve as a signal peptide directing secretion. The region spanning 43–256 (VPAECPELTR…DKYYAGLPPE (214 aa)) is the gL betaherpesvirus-type domain. Cysteine 154 and cysteine 159 are joined by a disulfide.

This sequence belongs to the herpesviridae glycoprotein L (gL) family. Betaherpesvirinae gL subfamily. In terms of assembly, interacts with glycoprotein H (gH); this interaction is necessary for the correct processing and cell surface expression of gH. Forms the envelope pentamer complex (PC) composed of gH, gL, UL128, UL130, and UL131A. The pentamer interacts with host NRP2. Forms the envelope trimer complex composed of gH, gL, and gO. The trimer interacts with host PDGFRA. The trimer also interacts with host EPHA2.

It is found in the virion membrane. The protein localises to the host cell membrane. The protein resides in the host Golgi apparatus. It localises to the host trans-Golgi network. Functionally, the heterodimer glycoprotein H-glycoprotein L is required for the fusion of viral and plasma membranes leading to virus entry into the host cell. Acts as a functional inhibitor of gH and maintains gH in an inhibited form. Upon binding to host integrins, gL dissociates from gH leading to activation of the viral fusion glycoproteins gB and gH. In human cytomegalovirus, forms two distincts complexes to mediate viral entry, a trimer and a pentamer at the surface of the virion envelope. The gH-gL-gO trimer is required for infection in fibroblasts by interacting with host PDGFRA, and in glioblastoma cells by interacting with host EPHA2. The gH-gL-UL128-UL130-UL131A pentamer is essential for viral entry in epithelial, endothelial and myeloid cells via interaction with host NRP2. In Human cytomegalovirus (strain 5035) (HHV-5), this protein is Envelope glycoprotein L.